Here is a 238-residue protein sequence, read N- to C-terminus: Ribonuclease PH (238 aa).

Phosphate contacts are provided by residues Arg86 and 124–126; that span reads GTR.

It belongs to the RNase PH family. Homohexameric ring arranged as a trimer of dimers.

The catalysed reaction is tRNA(n+1) + phosphate = tRNA(n) + a ribonucleoside 5'-diphosphate. In terms of biological role, phosphorolytic 3'-5' exoribonuclease that plays an important role in tRNA 3'-end maturation. Removes nucleotide residues following the 3'-CCA terminus of tRNAs; can also add nucleotides to the ends of RNA molecules by using nucleoside diphosphates as substrates, but this may not be physiologically important. Probably plays a role in initiation of 16S rRNA degradation (leading to ribosome degradation) during starvation. This is Ribonuclease PH from Shigella dysenteriae serotype 1 (strain Sd197).